Reading from the N-terminus, the 335-residue chain is Cut9-interacting protein scn1 (335 aa).

The protein belongs to the metallo-dependent hydrolases superfamily.

Its function is as follows. Interacts with cut9. This Schizosaccharomyces pombe (strain 972 / ATCC 24843) (Fission yeast) protein is Cut9-interacting protein scn1 (scn1).